The chain runs to 354 residues: N-acetyl-gamma-glutamyl-phosphate reductase (354 aa).

Residue cysteine 156 is part of the active site.

The protein belongs to the NAGSA dehydrogenase family. Type 1 subfamily.

It is found in the cytoplasm. It catalyses the reaction N-acetyl-L-glutamate 5-semialdehyde + phosphate + NADP(+) = N-acetyl-L-glutamyl 5-phosphate + NADPH + H(+). The protein operates within amino-acid biosynthesis; L-arginine biosynthesis; N(2)-acetyl-L-ornithine from L-glutamate: step 3/4. Catalyzes the NADPH-dependent reduction of N-acetyl-5-glutamyl phosphate to yield N-acetyl-L-glutamate 5-semialdehyde. This is N-acetyl-gamma-glutamyl-phosphate reductase from Bordetella pertussis (strain Tohama I / ATCC BAA-589 / NCTC 13251).